Reading from the N-terminus, the 312-residue chain is Phosphoribosylaminoimidazole-succinocarboxamide synthase (312 aa).

The protein belongs to the SAICAR synthetase family.

It catalyses the reaction 5-amino-1-(5-phospho-D-ribosyl)imidazole-4-carboxylate + L-aspartate + ATP = (2S)-2-[5-amino-1-(5-phospho-beta-D-ribosyl)imidazole-4-carboxamido]succinate + ADP + phosphate + 2 H(+). It functions in the pathway purine metabolism; IMP biosynthesis via de novo pathway; 5-amino-1-(5-phospho-D-ribosyl)imidazole-4-carboxamide from 5-amino-1-(5-phospho-D-ribosyl)imidazole-4-carboxylate: step 1/2. This Legionella pneumophila (strain Paris) protein is Phosphoribosylaminoimidazole-succinocarboxamide synthase.